Here is a 79-residue protein sequence, read N- to C-terminus: UPF0349 protein GTNG_2908 (79 aa).

This sequence belongs to the UPF0349 family.

This is UPF0349 protein GTNG_2908 from Geobacillus thermodenitrificans (strain NG80-2).